The sequence spans 208 residues: uncharacterized protein (208 aa).

The segment at 126–151 (VGSGSGSDSSSGSTSSPNTVNNYNSD) is disordered. Over residues 131-141 (GSDSSSGSTSS) the composition is skewed to low complexity.

This is an uncharacterized protein from Dictyostelium discoideum (Social amoeba).